The sequence spans 138 residues: Large ribosomal subunit protein uL16 (138 aa).

Residues 1-15 (MLSPKKVKYRKKQRG) are compositionally biased toward basic residues. A disordered region spans residues 1–21 (MLSPKKVKYRKKQRGRLSGEA).

Belongs to the universal ribosomal protein uL16 family. As to quaternary structure, part of the 50S ribosomal subunit.

In terms of biological role, binds 23S rRNA and is also seen to make contacts with the A and possibly P site tRNAs. The polypeptide is Large ribosomal subunit protein uL16 (Borrelia garinii subsp. bavariensis (strain ATCC BAA-2496 / DSM 23469 / PBi) (Borreliella bavariensis)).